A 591-amino-acid chain; its full sequence is L-fucose isomerase (591 aa).

Catalysis depends on proton acceptor residues Glu-338 and Asp-362. Mn(2+) is bound by residues Glu-338, Asp-362, and His-529.

It belongs to the L-fucose isomerase family. Mn(2+) serves as cofactor.

The protein localises to the cytoplasm. It carries out the reaction L-fucose = L-fuculose. Its pathway is carbohydrate degradation; L-fucose degradation; L-lactaldehyde and glycerone phosphate from L-fucose: step 1/3. Its function is as follows. Converts the aldose L-fucose into the corresponding ketose L-fuculose. The sequence is that of L-fucose isomerase from Bacteroides thetaiotaomicron (strain ATCC 29148 / DSM 2079 / JCM 5827 / CCUG 10774 / NCTC 10582 / VPI-5482 / E50).